The sequence spans 187 residues: MNYFDNKIDQFATYLQKRNNLDHIQFLQVRLGMQVLAKNIGKLIVMYTLAYILNIFIFTLITNISFYLIRRYAHGAHAPSSFWCYIESITLFIVLPLLVLHFHINETLMMFLALLSVGVVIKYAPAATKKKPIPARLVKQKRYFSIIISTILFIITLFVKEPYTQFIQLGIIIQAITLLPIYYSKED.

The next 5 membrane-spanning stretches (helical) occupy residues 49–69 (LAYILNIFIFTLITNISFYLI), 82–102 (FWCYIESITLFIVLPLLVLHF), 107–127 (TLMMFLALLSVGVVIKYAPAA), 143–163 (YFSIIISTILFIITLFVKEPY), and 164–184 (TQFIQLGIIIQAITLLPIYYS).

It belongs to the AgrB family.

Its subcellular location is the cell membrane. Its function is as follows. Essential for the production of a quorum sensing system signal molecule, the autoinducing peptide (AIP). This quorum sensing system is responsible for the regulation of the expression of virulence factor genes. Involved in the proteolytic processing of AgrD, the precursor of AIP. The chain is Accessory gene regulator protein B from Staphylococcus aureus (strain MRSA252).